Here is a 643-residue protein sequence, read N- to C-terminus: Threonine--tRNA ligase (643 aa).

Residues 1-61 (MPIITLPDGS…EQDATLEIIT (61 aa)) enclose the TGS domain. The tract at residues 243–534 (DHRKIGKALD…ITEEYAGFFP (292 aa)) is catalytic. Zn(2+) contacts are provided by Cys334, His385, and His511.

Belongs to the class-II aminoacyl-tRNA synthetase family. As to quaternary structure, homodimer. The cofactor is Zn(2+).

The protein localises to the cytoplasm. The enzyme catalyses tRNA(Thr) + L-threonine + ATP = L-threonyl-tRNA(Thr) + AMP + diphosphate + H(+). Functionally, catalyzes the attachment of threonine to tRNA(Thr) in a two-step reaction: L-threonine is first activated by ATP to form Thr-AMP and then transferred to the acceptor end of tRNA(Thr). Also edits incorrectly charged L-seryl-tRNA(Thr). The sequence is that of Threonine--tRNA ligase from Haemophilus influenzae (strain ATCC 51907 / DSM 11121 / KW20 / Rd).